The chain runs to 118 residues: NADH-ubiquinone oxidoreductase chain 3 (118 aa).

The next 3 membrane-spanning stretches (helical) occupy residues 7 to 27 (ICIS…VPFL), 62 to 82 (LVSI…PWAV), and 87 to 107 (IDLF…IGFL).

This sequence belongs to the complex I subunit 3 family.

The protein localises to the mitochondrion membrane. It catalyses the reaction a ubiquinone + NADH + 5 H(+)(in) = a ubiquinol + NAD(+) + 4 H(+)(out). In terms of biological role, core subunit of the mitochondrial membrane respiratory chain NADH dehydrogenase (Complex I) that is believed to belong to the minimal assembly required for catalysis. Complex I functions in the transfer of electrons from NADH to the respiratory chain. The immediate electron acceptor for the enzyme is believed to be ubiquinone. The sequence is that of NADH-ubiquinone oxidoreductase chain 3 (ND3) from Oenothera berteroana (Bertero's evening primrose).